A 488-amino-acid polypeptide reads, in one-letter code: Eukaryotic translation initiation factor 3 subunit L (488 aa).

Disordered regions lie at residues Met-1 to Gln-34 and Ser-427 to Glu-449. A compositionally biased stretch (basic and acidic residues) spans Gln-7–Pro-16. The segment covering Asp-17–Met-27 has biased composition (acidic residues). Positions Asp-256–Ile-450 constitute a PCI domain. A compositionally biased stretch (basic and acidic residues) spans Leu-431–Gln-440.

It belongs to the eIF-3 subunit L family. As to quaternary structure, component of the eukaryotic translation initiation factor 3 (eIF-3) complex.

Its subcellular location is the cytoplasm. Functionally, component of the eukaryotic translation initiation factor 3 (eIF-3) complex, which is involved in protein synthesis of a specialized repertoire of mRNAs and, together with other initiation factors, stimulates binding of mRNA and methionyl-tRNAi to the 40S ribosome. The eIF-3 complex specifically targets and initiates translation of a subset of mRNAs involved in cell proliferation. The polypeptide is Eukaryotic translation initiation factor 3 subunit L (Phaeosphaeria nodorum (strain SN15 / ATCC MYA-4574 / FGSC 10173) (Glume blotch fungus)).